The primary structure comprises 233 residues: Large ribosomal subunit protein uL1 (233 aa).

The protein belongs to the universal ribosomal protein uL1 family. As to quaternary structure, part of the 50S ribosomal subunit.

Its function is as follows. Binds directly to 23S rRNA. The L1 stalk is quite mobile in the ribosome, and is involved in E site tRNA release. In terms of biological role, protein L1 is also a translational repressor protein, it controls the translation of the L11 operon by binding to its mRNA. This is Large ribosomal subunit protein uL1 from Parvibaculum lavamentivorans (strain DS-1 / DSM 13023 / NCIMB 13966).